The chain runs to 476 residues: Glutamate--tRNA ligase (476 aa).

The 'HIGH' region motif lies at 9-19; it reads PSPTGLFHIGT. The 'KMSKS' region signature appears at 248–252; the sequence is KLSKR. Lys-251 serves as a coordination point for ATP.

This sequence belongs to the class-I aminoacyl-tRNA synthetase family. Glutamate--tRNA ligase type 1 subfamily. In terms of assembly, monomer.

The protein localises to the cytoplasm. It catalyses the reaction tRNA(Glu) + L-glutamate + ATP = L-glutamyl-tRNA(Glu) + AMP + diphosphate. In terms of biological role, catalyzes the attachment of glutamate to tRNA(Glu) in a two-step reaction: glutamate is first activated by ATP to form Glu-AMP and then transferred to the acceptor end of tRNA(Glu). This Prochlorococcus marinus (strain MIT 9301) protein is Glutamate--tRNA ligase.